The chain runs to 376 residues: Probable allantoicase (376 aa).

This sequence belongs to the allantoicase family.

It catalyses the reaction allantoate + H2O = (S)-ureidoglycolate + urea. It functions in the pathway nitrogen metabolism; (S)-allantoin degradation; (S)-ureidoglycolate from allantoate (aminidohydrolase route): step 1/1. The polypeptide is Probable allantoicase (Streptomyces avermitilis (strain ATCC 31267 / DSM 46492 / JCM 5070 / NBRC 14893 / NCIMB 12804 / NRRL 8165 / MA-4680)).